The primary structure comprises 399 residues: Succinate--CoA ligase [ADP-forming] subunit beta (399 aa).

The region spanning 9–254 (KAVLAEFGAP…ESEEDPKEIE (246 aa)) is the ATP-grasp domain. ATP contacts are provided by residues Lys-46, 53–55 (GRG), Glu-109, Ala-112, and Glu-117. Residues Asn-209 and Asp-223 each contribute to the Mg(2+) site. Substrate-binding positions include Asn-274 and 331 to 333 (GIM).

It belongs to the succinate/malate CoA ligase beta subunit family. As to quaternary structure, heterotetramer of two alpha and two beta subunits. Mg(2+) serves as cofactor.

The enzyme catalyses succinate + ATP + CoA = succinyl-CoA + ADP + phosphate. It catalyses the reaction GTP + succinate + CoA = succinyl-CoA + GDP + phosphate. It participates in carbohydrate metabolism; tricarboxylic acid cycle; succinate from succinyl-CoA (ligase route): step 1/1. Functionally, succinyl-CoA synthetase functions in the citric acid cycle (TCA), coupling the hydrolysis of succinyl-CoA to the synthesis of either ATP or GTP and thus represents the only step of substrate-level phosphorylation in the TCA. The beta subunit provides nucleotide specificity of the enzyme and binds the substrate succinate, while the binding sites for coenzyme A and phosphate are found in the alpha subunit. The polypeptide is Succinate--CoA ligase [ADP-forming] subunit beta (Caulobacter sp. (strain K31)).